The chain runs to 161 residues: MSSFVTNGYLSVTLEPHELTLDIKTNIRNAVYKTYLHREISGKMAKKIEIREDVELPLGEIVNNSVVINVPCVITYAYYHVGDIVRGTLNIEDESNVTIQCGDLICKLSRDSGTVSFSDSKYCFFRNGNAYDNGSEVTAVLMEAQQGIESSFVFLANIVDS.

This sequence belongs to the poxviridae DNA-directed RNA polymerase 18 kDa subunit family. In terms of assembly, the DNA-dependent RNA polymerase used for intermediate and late genes expression consists of eight subunits Rpo30/OPG66, Rpo7/OPG90, Rpo22/OPG103, Rpo147/OPG105, Rpo18/OPG119, Rpo19/OPG131, Rpo132/OPG151 and Rpo35/OPG156. The same holoenzyme, with the addition of the transcription-specificity factor OPG109, is used for early gene expression.

Its subcellular location is the virion. It carries out the reaction RNA(n) + a ribonucleoside 5'-triphosphate = RNA(n+1) + diphosphate. Functionally, part of the DNA-dependent RNA polymerase which catalyzes the transcription of viral DNA into RNA using the four ribonucleoside triphosphates as substrates. Responsible for the transcription of early, intermediate and late genes. DNA-dependent RNA polymerase associates with the early transcription factor (ETF), itself composed of OPG118 and OPG133, thereby allowing the early genes transcription. Late transcription, and probably also intermediate transcription, require newly synthesized RNA polymerase. The protein is DNA-directed RNA polymerase 18 kDa subunit (OPG119) of Vaccinia virus (strain Copenhagen) (VACV).